The primary structure comprises 536 residues: B3 domain-containing protein Os03g0619800 (536 aa).

A DNA-binding region (TF-B3 1) is located at residues 26–119; it reads MRCFLRRMAA…RYEVLILDSD (94 aa). The segment at 138-199 is disordered; it reads DKTVDPVDSS…VEPQTPSGSD (62 aa). Low complexity-rich tracts occupy residues 145–160 and 171–183; these read DSSGSSSNDTTQSSRS and SSSEKSGEDSPSG. The segment at residues 231 to 330 is a DNA-binding region (TF-B3 2); that stretch reads VAVMKKCNLQ…AFTVHLLQAE (100 aa). The tract at residues 335-396 is disordered; that stretch reads RDGTDVHKIG…SDGPSEPPYI (62 aa). Positions 344 to 355 are enriched in polar residues; that stretch reads GSSQNKRNSKMA. Over residues 372–382 the composition is skewed to basic and acidic residues; it reads SNKHGVSHESL. The segment at residues 429–529 is a DNA-binding region (TF-B3 3); sequence ISKLAGSGGK…TMEVHIISNL (101 aa).

The protein resides in the nucleus. The polypeptide is B3 domain-containing protein Os03g0619800 (Oryza sativa subsp. japonica (Rice)).